The following is a 158-amino-acid chain: 2-C-methyl-D-erythritol 2,4-cyclodiphosphate synthase (158 aa).

A divalent metal cation contacts are provided by D9 and H11. Residues 9 to 11 (DVH) and 35 to 36 (HS) each bind 4-CDP-2-C-methyl-D-erythritol 2-phosphate. H43 provides a ligand contact to a divalent metal cation. 4-CDP-2-C-methyl-D-erythritol 2-phosphate-binding positions include 57–59 (DIG), 62–66 (FPDTD), 101–107 (AQKPKMA), 133–136 (TTTE), F140, and R143.

Belongs to the IspF family. In terms of assembly, homotrimer. A divalent metal cation serves as cofactor.

The catalysed reaction is 4-CDP-2-C-methyl-D-erythritol 2-phosphate = 2-C-methyl-D-erythritol 2,4-cyclic diphosphate + CMP. It participates in isoprenoid biosynthesis; isopentenyl diphosphate biosynthesis via DXP pathway; isopentenyl diphosphate from 1-deoxy-D-xylulose 5-phosphate: step 4/6. Functionally, involved in the biosynthesis of isopentenyl diphosphate (IPP) and dimethylallyl diphosphate (DMAPP), two major building blocks of isoprenoid compounds. Catalyzes the conversion of 4-diphosphocytidyl-2-C-methyl-D-erythritol 2-phosphate (CDP-ME2P) to 2-C-methyl-D-erythritol 2,4-cyclodiphosphate (ME-CPP) with a corresponding release of cytidine 5-monophosphate (CMP). The sequence is that of 2-C-methyl-D-erythritol 2,4-cyclodiphosphate synthase from Geobacillus sp. (strain WCH70).